The primary structure comprises 339 residues: Alpha-ketoglutarate-dependent dioxygenase btcD (339 aa).

H96 is a binding site for substrate. 2 residues coordinate Fe cation: H140 and D142. Residue T173 participates in 2-oxoglutarate binding. The segment at 207-230 (DGSDPKFQVPRGSPANVGTNLRPT) is disordered. H302 contributes to the Fe cation binding site. Residues R314 and R318 each contribute to the 2-oxoglutarate site. Substrate is bound at residue R318.

The protein belongs to the TfdA dioxygenase family. Fe(2+) is required as a cofactor.

It functions in the pathway secondary metabolite biosynthesis; terpenoid biosynthesis. Its function is as follows. Alpha-ketoglutarate-dependent dioxygenase; part of the gene cluster that mediates the biosynthesis of betaestacins. The bifunctional terpene synthase btcA converts isopentenyl diphosphate (IPP) and dimethylallyl diphosphate (DMAPP) into the sesterterpene betaestacin I. The C-terminal prenyltransferase (PT) domain of btcA catalyzes formation of GFPP, whereas the N-terminal terpene cyclase (TC) domain catalyzes the cyclization of GFPP into betaestacin I. The cytochrome P450 monooxygenase btcB is then responsible for the six-step oxidation of betaestacin I to yield betaestacin II. The roles of the cytochrome P450 monooxygenase btcC and the alpha-ketoglutarate-dependent dioxygenase btcD have not been identified yet. The polypeptide is Alpha-ketoglutarate-dependent dioxygenase btcD (Neocamarosporium betae (Beet black rot fungus)).